The sequence spans 406 residues: Probable endo-xylogalacturonan hydrolase A (406 aa).

The N-terminal stretch at 1-18 (MLYPRNLALFSLLSLSSA) is a signal peptide. PbH1 repeat units lie at residues 183-213 (TQHV…DIGA), 214-235 (STHV…AFKP), 237-257 (SNYV…SVGS), and 299-320 (VKNV…QIES). The Proton donor role is filled by D228. Residue H251 is part of the active site. Residue N301 is glycosylated (N-linked (GlcNAc...) asparagine).

It belongs to the glycosyl hydrolase 28 family.

It localises to the secreted. Its function is as follows. Pectinolytic enzyme involved in the degradation of xylogalacturonan (xga), a galacturonan backbone heavily substituted with xylose, and which is one important component of the hairy regions of pectin. Activity requires a galacturonic acid backbone substituted with xylose. The polypeptide is Probable endo-xylogalacturonan hydrolase A (xghA) (Aspergillus fumigatus (strain ATCC MYA-4609 / CBS 101355 / FGSC A1100 / Af293) (Neosartorya fumigata)).